A 309-amino-acid chain; its full sequence is Porphobilinogen deaminase (309 aa).

C240 is modified (S-(dipyrrolylmethanemethyl)cysteine).

It belongs to the HMBS family. As to quaternary structure, monomer. Requires dipyrromethane as cofactor.

The enzyme catalyses 4 porphobilinogen + H2O = hydroxymethylbilane + 4 NH4(+). Its pathway is porphyrin-containing compound metabolism; protoporphyrin-IX biosynthesis; coproporphyrinogen-III from 5-aminolevulinate: step 2/4. Functionally, tetrapolymerization of the monopyrrole PBG into the hydroxymethylbilane pre-uroporphyrinogen in several discrete steps. The protein is Porphobilinogen deaminase of Chromobacterium violaceum (strain ATCC 12472 / DSM 30191 / JCM 1249 / CCUG 213 / NBRC 12614 / NCIMB 9131 / NCTC 9757 / MK).